The sequence spans 342 residues: Ketol-acid reductoisomerase (NADP(+)) (342 aa).

A KARI N-terminal Rossmann domain is found at 2–181 (VKVYYNGDIQ…GGARAGVLET (180 aa)). NADP(+)-binding positions include 25-28 (YGSQ), Arg-48, Ser-52, and 82-85 (DEQQ). The active site involves His-107. Residue Gly-133 coordinates NADP(+). Positions 182–327 (TFKEETETDL…RKLREMMPFV (146 aa)) constitute a KARI C-terminal knotted domain. 4 residues coordinate Mg(2+): Asp-190, Glu-194, Glu-226, and Glu-230. Ser-251 provides a ligand contact to substrate.

Belongs to the ketol-acid reductoisomerase family. Mg(2+) is required as a cofactor.

It catalyses the reaction (2R)-2,3-dihydroxy-3-methylbutanoate + NADP(+) = (2S)-2-acetolactate + NADPH + H(+). It carries out the reaction (2R,3R)-2,3-dihydroxy-3-methylpentanoate + NADP(+) = (S)-2-ethyl-2-hydroxy-3-oxobutanoate + NADPH + H(+). Its pathway is amino-acid biosynthesis; L-isoleucine biosynthesis; L-isoleucine from 2-oxobutanoate: step 2/4. The protein operates within amino-acid biosynthesis; L-valine biosynthesis; L-valine from pyruvate: step 2/4. Involved in the biosynthesis of branched-chain amino acids (BCAA). Catalyzes an alkyl-migration followed by a ketol-acid reduction of (S)-2-acetolactate (S2AL) to yield (R)-2,3-dihydroxy-isovalerate. In the isomerase reaction, S2AL is rearranged via a Mg-dependent methyl migration to produce 3-hydroxy-3-methyl-2-ketobutyrate (HMKB). In the reductase reaction, this 2-ketoacid undergoes a metal-dependent reduction by NADPH to yield (R)-2,3-dihydroxy-isovalerate. In Bacillus pumilus (strain SAFR-032), this protein is Ketol-acid reductoisomerase (NADP(+)).